Here is a 322-residue protein sequence, read N- to C-terminus: Exosome complex component RRP4 homolog (322 aa).

The S1 motif domain maps to 94–172 (GDIVVGRVIE…HDGSLQLQAR (79 aa)). The KH domain maps to 182-237 (GQLLKVDPYLVKRSKHHFHYVESLGIDLIIGCNGFIWVGEHVEVRDPMAIDDQKDE).

This sequence belongs to the RRP4 family. As to quaternary structure, component of the RNA exosome complex. Interacts with RPP41. Expressed in roots, stems, rosette and cauline leaves, flowers and siliques.

The protein resides in the cytoplasm. Its subcellular location is the nucleus. It localises to the nucleolus. Non-catalytic component of the RNA exosome complex which has 3'-&gt;5' exoribonuclease activity and participates in a multitude of cellular RNA processing, maturation and degradation events. In vitro, is an active and distributive 3'-&gt;5' exonuclease requiring a free 3'-OH on the substrate and releasing nucleoside 5'-monophosphates. Required for normal embryo development. This is Exosome complex component RRP4 homolog from Arabidopsis thaliana (Mouse-ear cress).